A 138-amino-acid polypeptide reads, in one-letter code: Nucleoside diphosphate kinase (138 aa).

Residues lysine 9, phenylalanine 57, arginine 85, threonine 91, arginine 102, and asparagine 112 each coordinate ATP. The active-site Pros-phosphohistidine intermediate is histidine 115.

The protein belongs to the NDK family. Homotetramer. Mg(2+) serves as cofactor.

Its subcellular location is the cytoplasm. It catalyses the reaction a 2'-deoxyribonucleoside 5'-diphosphate + ATP = a 2'-deoxyribonucleoside 5'-triphosphate + ADP. It carries out the reaction a ribonucleoside 5'-diphosphate + ATP = a ribonucleoside 5'-triphosphate + ADP. In terms of biological role, major role in the synthesis of nucleoside triphosphates other than ATP. The ATP gamma phosphate is transferred to the NDP beta phosphate via a ping-pong mechanism, using a phosphorylated active-site intermediate. This Deinococcus geothermalis (strain DSM 11300 / CIP 105573 / AG-3a) protein is Nucleoside diphosphate kinase.